A 346-amino-acid polypeptide reads, in one-letter code: NADH-ubiquinone oxidoreductase chain 2 (346 aa).

The next 10 helical transmembrane spans lie at 25 to 45, 52 to 72, 95 to 115, 124 to 144, 149 to 169, 178 to 196, 200 to 219, 247 to 267, 274 to 294, and 326 to 346; these read HWILAWTGLEINTLAIIPLIS, AIEAAIKYFLTQSTASALILF, CLILTMAIAIKLGLVPFHFWF, LITALLLSTLMKLPPMTLLLM, LNPALLTLLAVSSALVGGWMG, ILAFSSISHLGWMIVIIIY, LTILTFIIYSLMTSTVFLSL, TLLSLAGLPPLTGFMPKWLII, EMTPVATTIAMLSLLGLFFYL, and AILTVLSISLLPLSPLITTLV.

It belongs to the complex I subunit 2 family.

It is found in the mitochondrion inner membrane. It carries out the reaction a ubiquinone + NADH + 5 H(+)(in) = a ubiquinol + NAD(+) + 4 H(+)(out). Its function is as follows. Core subunit of the mitochondrial membrane respiratory chain NADH dehydrogenase (Complex I) that is believed to belong to the minimal assembly required for catalysis. Complex I functions in the transfer of electrons from NADH to the respiratory chain. The immediate electron acceptor for the enzyme is believed to be ubiquinone. The protein is NADH-ubiquinone oxidoreductase chain 2 (MT-ND2) of Coturnix japonica (Japanese quail).